Here is a 228-residue protein sequence, read N- to C-terminus: ATP synthase subunit a (228 aa).

The next 7 helical transmembrane spans lie at 16–36 (GQEW…FIIA), 45–65 (LVPT…ISMG), 80–100 (LIGS…IPGF), 106–126 (NINF…YLGI), 138–158 (FMGP…ISHL), 178–198 (FLMV…FFLL), and 201–221 (FGVL…AGSI).

The protein belongs to the ATPase A chain family. F-type ATPases have 2 components, CF(1) - the catalytic core - and CF(0) - the membrane proton channel. CF(1) has five subunits: alpha(3), beta(3), gamma(1), delta(1), epsilon(1). CF(0) has three main subunits: a(1), b(2) and c(9-12). The alpha and beta chains form an alternating ring which encloses part of the gamma chain. CF(1) is attached to CF(0) by a central stalk formed by the gamma and epsilon chains, while a peripheral stalk is formed by the delta and b chains.

It localises to the cell inner membrane. Key component of the proton channel; it plays a direct role in the translocation of protons across the membrane. The protein is ATP synthase subunit a of Aliarcobacter butzleri (strain RM4018) (Arcobacter butzleri).